A 142-amino-acid chain; its full sequence is Large-conductance mechanosensitive channel (142 aa).

Helical transmembrane passes span 10–30 and 86–106; these read FAIKGNVIDLAVGVIIGAAFS and GNFITVAVNFAILAFIIFLMV.

Belongs to the MscL family. Homopentamer.

Its subcellular location is the cell inner membrane. Channel that opens in response to stretch forces in the membrane lipid bilayer. May participate in the regulation of osmotic pressure changes within the cell. The polypeptide is Large-conductance mechanosensitive channel (Polaromonas naphthalenivorans (strain CJ2)).